Here is a 270-residue protein sequence, read N- to C-terminus: Probable ribosomal RNA small subunit methyltransferase A (270 aa).

S-adenosyl-L-methionine contacts are provided by histidine 19, leucine 21, glycine 46, glutamate 67, aspartate 92, and asparagine 107.

The protein belongs to the class I-like SAM-binding methyltransferase superfamily. rRNA adenine N(6)-methyltransferase family. RsmA subfamily.

It localises to the cytoplasm. In terms of biological role, specifically dimethylates two adjacent adenosines in the loop of a conserved hairpin near the 3'-end of 16S rRNA in the 30S particle. May play a critical role in biogenesis of 30S subunits. The protein is Probable ribosomal RNA small subunit methyltransferase A of Methanococcoides burtonii (strain DSM 6242 / NBRC 107633 / OCM 468 / ACE-M).